A 637-amino-acid polypeptide reads, in one-letter code: Chaperone protein DnaK (637 aa).

Threonine 196 bears the Phosphothreonine; by autocatalysis mark. Disordered regions lie at residues 484-528 (KATG…EVDT) and 598-637 (TEAG…VDDK). Residues 501–528 (SETEIEKMKKDASSHADEDKKKKEEVDT) show a composition bias toward basic and acidic residues. Residues 600–620 (AGAPGAAGAAGAAGQGQSASS) are compositionally biased toward low complexity. Residues 621–637 (GKDDEVKNADFEVVDDK) show a composition bias toward basic and acidic residues.

Belongs to the heat shock protein 70 family.

Functionally, acts as a chaperone. In Chloroherpeton thalassium (strain ATCC 35110 / GB-78), this protein is Chaperone protein DnaK.